The sequence spans 89 residues: Small ribosomal subunit protein uS15 (89 aa).

Belongs to the universal ribosomal protein uS15 family. As to quaternary structure, part of the 30S ribosomal subunit. Forms a bridge to the 50S subunit in the 70S ribosome, contacting the 23S rRNA.

In terms of biological role, one of the primary rRNA binding proteins, it binds directly to 16S rRNA where it helps nucleate assembly of the platform of the 30S subunit by binding and bridging several RNA helices of the 16S rRNA. Functionally, forms an intersubunit bridge (bridge B4) with the 23S rRNA of the 50S subunit in the ribosome. In Roseobacter denitrificans (strain ATCC 33942 / OCh 114) (Erythrobacter sp. (strain OCh 114)), this protein is Small ribosomal subunit protein uS15.